We begin with the raw amino-acid sequence, 217 residues long: Flagellar L-ring protein 2 (217 aa).

The N-terminal stretch at 1-15 (MRILLALTWLAWLGA) is a signal peptide. Residue Cys-16 is the site of N-palmitoyl cysteine attachment. The S-diacylglycerol cysteine moiety is linked to residue Cys-16.

It belongs to the FlgH family. The basal body constitutes a major portion of the flagellar organelle and consists of four rings (L,P,S, and M) mounted on a central rod.

The protein localises to the cell outer membrane. Its subcellular location is the bacterial flagellum basal body. Functionally, assembles around the rod to form the L-ring and probably protects the motor/basal body from shearing forces during rotation. The chain is Flagellar L-ring protein 2 from Burkholderia thailandensis (strain ATCC 700388 / DSM 13276 / CCUG 48851 / CIP 106301 / E264).